Here is a 247-residue protein sequence, read N- to C-terminus: Trypsin-2 (247 aa).

An N-terminal signal peptide occupies residues 1-15 (MNLLLILTFVAAAVA). Positions 16 to 23 (APFDDDDK) are cleaved as a propeptide — activation peptide. The 221-residue stretch at 24 to 244 (IVGGYICEEN…YVDWIKDTIA (221 aa)) folds into the Peptidase S1 domain. Cystine bridges form between cysteine 30-cysteine 160, cysteine 48-cysteine 64, cysteine 171-cysteine 185, and cysteine 196-cysteine 220. Histidine 63 functions as the Charge relay system in the catalytic mechanism. The Ca(2+) site is built by glutamate 75, asparagine 77, valine 80, and glutamate 85. The active-site Charge relay system is the aspartate 107. Tyrosine 154 carries the sulfotyrosine modification. Serine 200 functions as the Charge relay system in the catalytic mechanism.

It belongs to the peptidase S1 family. Ca(2+) is required as a cofactor. In terms of processing, sulfated on tyrosine. Sulfation at Tyr-154 increases selectivity towards basic versus apolar residues at the P2' position of inhibitors that bind in a substrate-like fashion. Although the increase in selectivity is relatively small, it may facilitate digestion of a broader range of dietary proteins. Expressed in Paneth cells, at the base of small intestinal crypts.

Its subcellular location is the secreted. It is found in the extracellular space. The catalysed reaction is Preferential cleavage: Arg-|-Xaa, Lys-|-Xaa.. Functionally, in the ileum, may be involved in defensin processing, including DEFA5. The sequence is that of Trypsin-2 (PRSS2) from Homo sapiens (Human).